A 455-amino-acid polypeptide reads, in one-letter code: Mu-like prophage FluMu DNA circularization protein (455 aa).

Residues 368-387 (VILDNADAEQWTSYAALEQY) constitute a DNA-binding region (H-T-H motif).

The protein to phage Mu protein N.

The protein is Mu-like prophage FluMu DNA circularization protein of Haemophilus influenzae (strain ATCC 51907 / DSM 11121 / KW20 / Rd).